The following is a 177-amino-acid chain: Alkyl hydroperoxide reductase AhpD (177 aa).

The Proton donor role is filled by Cys-131. The cysteines at positions 131 and 134 are disulfide-linked. Catalysis depends on Cys-134, which acts as the Cysteine sulfenic acid (-SOH) intermediate.

Belongs to the AhpD family.

The enzyme catalyses N(6)-[(R)-dihydrolipoyl]-L-lysyl-[lipoyl-carrier protein] + a hydroperoxide = N(6)-[(R)-lipoyl]-L-lysyl-[lipoyl-carrier protein] + an alcohol + H2O. In terms of biological role, antioxidant protein with alkyl hydroperoxidase activity. Required for the reduction of the AhpC active site cysteine residues and for the regeneration of the AhpC enzyme activity. This Solibacter usitatus (strain Ellin6076) protein is Alkyl hydroperoxide reductase AhpD.